The primary structure comprises 257 residues: Thioredoxin-dependent peroxide reductase, mitochondrial (257 aa).

A mitochondrion-targeting transit peptide spans 1–62 (MAAAAGRLLW…SAFSTSSSFH (62 aa)). A Thioredoxin domain is found at 64–222 (PAVTQHAPYF…TLRLVKAFQF (159 aa)). K84 is modified (N6-succinyllysine). The residue at position 92 (K92) is an N6-acetyllysine; alternate. K92 carries the N6-succinyllysine; alternate modification. The active-site Cysteine sulfenic acid (-SOH) intermediate is C109. A Phosphothreonine modification is found at T147.

It belongs to the peroxiredoxin family. AhpC/Prx1 subfamily. In terms of assembly, homodimer; disulfide-linked, upon oxidation. 6 homodimers assemble to form a ring-like dodecamer. Interacts with NEK6. Interacts with LRRK2. Interacts with MAP3K13. Interacts with RPS6KC1 (via PX domain). Post-translationally, phosphorylated by LRRK2; phosphorylation reduces perodixase activity. In terms of processing, the enzyme can be inactivated by further oxidation of the cysteine sulfenic acid (C(P)-SOH) to sulphinic acid (C(P)-SO2H) and sulphonic acid (C(P)-SO3H) instead of its condensation to a disulfide bond. S-palmitoylated. In terms of tissue distribution, housekeeping-type gene preferentially expressed in murine erythroleukemia (MEL) cells.

It localises to the mitochondrion. The protein resides in the cytoplasm. Its subcellular location is the early endosome. It carries out the reaction a hydroperoxide + [thioredoxin]-dithiol = an alcohol + [thioredoxin]-disulfide + H2O. Functionally, thiol-specific peroxidase that catalyzes the reduction of hydrogen peroxide and organic hydroperoxides to water and alcohols, respectively. Plays a role in cell protection against oxidative stress by detoxifying peroxides. Acts synergistically with MAP3K13 to regulate the activation of NF-kappa-B in the cytosol. Required for the maintenance of physical strength. This Mus musculus (Mouse) protein is Thioredoxin-dependent peroxide reductase, mitochondrial (Prdx3).